The following is a 300-amino-acid chain: Zinc finger CCCH-type antiviral protein 1-like (300 aa).

An N-acetylalanine modification is found at Ala-2. Polar residues predominate over residues 252 to 263; the sequence is NTDNSSPSTEHS. A disordered region spans residues 252–300; it reads NTDNSSPSTEHSQGLEKQGVHAAGAAEAGPLASVPAQSAKKPCPVSCEK. Residues 271-283 show a composition bias toward low complexity; that stretch reads VHAAGAAEAGPLA.

This Homo sapiens (Human) protein is Zinc finger CCCH-type antiviral protein 1-like (ZC3HAV1L).